The chain runs to 366 residues: 3-dehydroquinate synthase (366 aa).

NAD(+) is bound by residues 69–74 (DGEAYK), 103–107 (GVIGD), 127–128 (TT), Lys-140, and Lys-149. 3 residues coordinate Zn(2+): Glu-182, His-245, and His-262.

Belongs to the sugar phosphate cyclases superfamily. Dehydroquinate synthase family. Requires Co(2+) as cofactor. It depends on Zn(2+) as a cofactor. The cofactor is NAD(+).

It localises to the cytoplasm. The catalysed reaction is 7-phospho-2-dehydro-3-deoxy-D-arabino-heptonate = 3-dehydroquinate + phosphate. It functions in the pathway metabolic intermediate biosynthesis; chorismate biosynthesis; chorismate from D-erythrose 4-phosphate and phosphoenolpyruvate: step 2/7. Functionally, catalyzes the conversion of 3-deoxy-D-arabino-heptulosonate 7-phosphate (DAHP) to dehydroquinate (DHQ). The polypeptide is 3-dehydroquinate synthase (Pseudomonas fluorescens (strain ATCC BAA-477 / NRRL B-23932 / Pf-5)).